Reading from the N-terminus, the 651-residue chain is Chaperone protein dnaK1 (651 aa).

A Phosphothreonine; by autocatalysis modification is found at T197.

This sequence belongs to the heat shock protein 70 family.

Its function is as follows. Acts as a chaperone. In Thermosynechococcus vestitus (strain NIES-2133 / IAM M-273 / BP-1), this protein is Chaperone protein dnaK1 (dnaK1).